A 61-amino-acid chain; its full sequence is Potassium channel toxin alpha-KTx 6.9 (61 aa).

Positions 1-23 (MNAKFILLLLVVTTTTLLPDAKG) are cleaved as a signal peptide. Cystine bridges form between C29–C50, C35–C55, C39–C57, and C45–C60.

This sequence belongs to the short scorpion toxin superfamily. Potassium channel inhibitor family. Alpha-KTx 06 subfamily. In terms of tissue distribution, expressed by the venom gland.

It localises to the secreted. Its function is as follows. Inhibits Kv1.2/KCNA2 and Kv1.3/KCNA3 voltage-gated potassium channels. This Opistophthalmus carinatus (African yellow leg scorpion) protein is Potassium channel toxin alpha-KTx 6.9.